The primary structure comprises 91 residues: DNA/RNA-binding protein Alba (91 aa).

The residue at position 11 (Lys-11) is an N6-acetyllysine.

The protein belongs to the histone-like Alba family. Acetylated. Acetylation at Lys-11 decreases DNA-binding affinity.

The protein resides in the cytoplasm. It localises to the chromosome. Binds double-stranded DNA tightly but without sequence specificity. Incubation with DNA in vitro gives fibrous structures 10.3 +/- 1.1 nm in thickness (naked DNA is 1.83 +/- 0.37 nm). This protein does not significantly compact DNA. The sequence is that of DNA/RNA-binding protein Alba from Thermococcus kodakarensis (strain ATCC BAA-918 / JCM 12380 / KOD1) (Pyrococcus kodakaraensis (strain KOD1)).